A 489-amino-acid polypeptide reads, in one-letter code: Ribonuclease G (489 aa).

In terms of domain architecture, S1 motif spans 39 to 128 (GNIYKGRVSR…LTTDITLPSR (90 aa)). The Mg(2+) site is built by Asp-304 and Asp-347.

It belongs to the RNase E/G family. RNase G subfamily. As to quaternary structure, homodimer, in equilibrium with possible higher multimers. Mg(2+) is required as a cofactor.

The protein localises to the cytoplasm. Its function is as follows. An endonuclease that acts in the processing of the 5'-end of 16S rRNA and 23S rRNA. It prefers 5'-monophosphorylated substrates and cleaves single-stranded sites rich in A and U residues; contributes to tRNA processing and mRNA turnover. The polypeptide is Ribonuclease G (rng) (Escherichia coli O157:H7).